The following is a 533-amino-acid chain: Probable ADP-ribosylation factor-binding protein C25H2.16c (533 aa).

The VHS domain occupies 15 to 151 (ATEPYAFEPD…LLSYKGYTFP (137 aa)). Residues 178 to 305 (REAMSAKLQE…LLTQYDHLLE (128 aa)) enclose the GAT domain. A Phosphoserine modification is found at Ser-320. One can recognise a GAE domain in the interval 417-532 (NNFTSTCAFE…EYTGQSSIRL (116 aa)).

This sequence belongs to the GGA protein family.

Its subcellular location is the golgi apparatus. The protein resides in the trans-Golgi network. Its function is as follows. May play a role in the regulation of membrane traffic through the trans-Golgi network. In Schizosaccharomyces pombe (strain 972 / ATCC 24843) (Fission yeast), this protein is Probable ADP-ribosylation factor-binding protein C25H2.16c.